The sequence spans 254 residues: 5'-nucleotidase SurE (254 aa).

Residues D8, D9, S39, and N91 each coordinate a divalent metal cation.

The protein belongs to the SurE nucleotidase family. It depends on a divalent metal cation as a cofactor.

The protein resides in the cytoplasm. It carries out the reaction a ribonucleoside 5'-phosphate + H2O = a ribonucleoside + phosphate. Nucleotidase that shows phosphatase activity on nucleoside 5'-monophosphates. This is 5'-nucleotidase SurE from Methylibium petroleiphilum (strain ATCC BAA-1232 / LMG 22953 / PM1).